The chain runs to 384 residues: Actin-binding Rho-activating protein (384 aa).

Positions 1–11 (MARGEKGRGEG) are enriched in basic and acidic residues. 3 disordered regions span residues 1–20 (MARGEKGRGEGPAKSALRKV), 32–159 (GWQQ…SPTR), and 181–211 (EQEELKCRSDSIDTEDSGYGGETEERPEQDG). Polar residues predominate over residues 35 to 47 (QWANENSTRQAQE). The span at 134 to 145 (DGDEPEPEQPES) shows a compositional bias: acidic residues. Residues serine 156 and serine 191 each carry the phosphoserine modification. Actin-binding regions lie at residues 202–302 (ETEE…AERA) and 303–384 (KRAE…TLLK). 2 interaction with actin regions span residues 243-288 (SQVG…GDEG) and 355-384 (MRARKHGLVDFEGEMLWQGRDDHVVITLLK).

In terms of assembly, binds F-actin and ABLIM1, ABLIM2 and ABLIM3. Interaction with ABLIM2 and ABLIM3 enhances activity. As to expression, specifically expressed in heart and skeletal muscles.

The protein resides in the cytoplasm. It is found in the myofibril. Its subcellular location is the sarcomere. The protein localises to the cytoskeleton. In terms of biological role, acts as an activator of serum response factor (SRF)-dependent transcription possibly by inducing nuclear translocation of MKL1 or MKL2 and through a mechanism requiring Rho-actin signaling. This chain is Actin-binding Rho-activating protein (ABRA), found in Sus scrofa (Pig).